We begin with the raw amino-acid sequence, 582 residues long: Semenogelin-2 (582 aa).

The N-terminal stretch at 1–23 is a signal peptide; the sequence is MKSIILFVLSLLLILEKQAAVMG. Disordered stretches follow at residues 25 to 65, 91 to 157, 171 to 192, 272 to 366, and 393 to 557; these read KGGS…SSSI, HKTT…GISS, LSKEQASASGAQKGRTQGGSQS, NLNQ…KDIQ, and SNQD…HNTV. Positions 50-59 are enriched in basic and acidic residues; sequence GQKDKQHTES. Over residues 111–134 the composition is skewed to basic residues; the sequence is QKGRDHVKPKRHFRLIVIHRKGGQ. Polar residues-rich tracts occupy residues 137-157 and 174-192; these read HGTQNPSQNQGNSPSGKGISS and EQASASGAQKGRTQGGSQS. Positions 293-310 are enriched in basic and acidic residues; it reads TEERQFNHGEKSVQKDVP. Residues 325-335 are compositionally biased toward polar residues; sequence KSQNQVSIPSQ. Composition is skewed to basic and acidic residues over residues 336–345, 353–366, 396–405, and 413–426; these read DQEHGHKENK, TEERRLNCGEKDIQ, and TEERRLNGGEKDIQ. 2 stretches are compositionally biased toward polar residues: residues 427–437 and 445–455; these read KSVSKGSISIQ and KSQNQVTIPSQ. The segment covering 456–465 has biased composition (basic and acidic residues); sequence DQEHGHKENK. 2 stretches are compositionally biased toward polar residues: residues 487–498 and 506–529; these read KDVSQSSLSFQT and SQIQTPNPNQDQWSGLNAKGNSGK. Residues 530–546 are compositionally biased toward basic and acidic residues; it reads SADREQDLLSHEQESRY. A compositionally biased stretch (polar residues) spans 547–557; sequence QQKSSGAHNTV.

The protein belongs to the semenogelin family. As to quaternary structure, interacts with SERPINA5.

The protein localises to the secreted. In terms of biological role, participates in the formation of a gel matrix (sperm coagulum) entrapping the accessory gland secretions and ejaculated spermatozoa. The chain is Semenogelin-2 (SEMG2) from Colobus guereza (Mantled guereza).